The sequence spans 235 residues: Regulator of G-protein signaling 18 (235 aa).

Ser49 is subject to Phosphoserine. The RGS domain maps to 86–202 (SFDKLLSHRD…LKSEIYLHLI (117 aa)). Phosphoserine is present on residues Ser216 and Ser218.

It is found in the cytoplasm. Inhibits signal transduction by increasing the GTPase activity of G protein alpha subunits thereby driving them into their inactive GDP-bound form. Binds to G(i) alpha-1, G(i) alpha-2, G(i) alpha-3 and G(q) alpha. In Rattus norvegicus (Rat), this protein is Regulator of G-protein signaling 18 (Rgs18).